Consider the following 68-residue polypeptide: Large ribosomal subunit protein bL31 (68 aa).

Residues C16, C18, C38, and C41 each coordinate Zn(2+).

It belongs to the bacterial ribosomal protein bL31 family. Type A subfamily. In terms of assembly, part of the 50S ribosomal subunit. Zn(2+) serves as cofactor.

In terms of biological role, binds the 23S rRNA. The protein is Large ribosomal subunit protein bL31 of Thiobacillus denitrificans (strain ATCC 25259 / T1).